We begin with the raw amino-acid sequence, 889 residues long: Inter-alpha-trypsin inhibitor heavy chain H3 (889 aa).

Positions 1–21 are cleaved as a signal peptide; the sequence is MRTMWWPCLVLALLSGLETSG. Residues 22–33 constitute a propeptide that is removed on maturation; sequence FPRSPLQLLGKR. Residues 29–158 enclose the VIT domain; the sequence is LLGKRSLPEG…KVTFELTYEE (130 aa). N-linked (GlcNAc...) asparagine glycosylation occurs at asparagine 91. Residues 284-467 form the VWFA domain; that stretch reads NIVFVIDVSG…LQLQGFYEEV (184 aa). An N-linked (GlcNAc...) asparagine glycan is attached at asparagine 580. At aspartate 649 the chain carries Aspartate 1-(chondroitin 4-sulfate)-ester. Residues 650–889 constitute a propeptide that is removed on maturation; it reads PHFIIQIPGK…HTDYIVPSLF (240 aa).

It belongs to the ITIH family. I-alpha-I plasma protease inhibitors are assembled from one or two heavy chains (HC) and one light chain, bikunin. Pre-alpha-inhibitor (P-alpha-I) is composed of ITIH3/HC3 and bikunin. In terms of processing, heavy chains are linked to bikunin via chondroitin 4-sulfate esterified to the alpha-carboxyl of the C-terminal aspartate after propeptide cleavage. Expressed in both liver and brain.

The protein localises to the secreted. May act as a carrier of hyaluronan in serum or as a binding protein between hyaluronan and other matrix protein, including those on cell surfaces in tissues to regulate the localization, synthesis and degradation of hyaluronan which are essential to cells undergoing biological processes. In Mus musculus (Mouse), this protein is Inter-alpha-trypsin inhibitor heavy chain H3 (Itih3).